Consider the following 298-residue polypeptide: N-acetylmuramic acid 6-phosphate etherase (298 aa).

One can recognise an SIS domain in the interval 55-218 (IHAQVSGGGR…STGLMIKSGK (164 aa)). The active-site Proton donor is E83. E114 is a catalytic residue.

The protein belongs to the GCKR-like family. MurNAc-6-P etherase subfamily. Homodimer.

It catalyses the reaction N-acetyl-D-muramate 6-phosphate + H2O = N-acetyl-D-glucosamine 6-phosphate + (R)-lactate. The protein operates within amino-sugar metabolism; N-acetylmuramate degradation. It functions in the pathway amino-sugar metabolism; 1,6-anhydro-N-acetylmuramate degradation. Its pathway is cell wall biogenesis; peptidoglycan recycling. Its function is as follows. Specifically catalyzes the cleavage of the D-lactyl ether substituent of MurNAc 6-phosphate, producing GlcNAc 6-phosphate and D-lactate. Together with AnmK, is also required for the utilization of anhydro-N-acetylmuramic acid (anhMurNAc) either imported from the medium or derived from its own cell wall murein, and thus plays a role in cell wall recycling. This Escherichia coli (strain K12 / MC4100 / BW2952) protein is N-acetylmuramic acid 6-phosphate etherase.